A 152-amino-acid chain; its full sequence is Endoribonuclease YbeY (152 aa).

Zn(2+)-binding residues include His-118, His-122, and His-128.

It belongs to the endoribonuclease YbeY family. Zn(2+) serves as cofactor.

Its subcellular location is the cytoplasm. In terms of biological role, single strand-specific metallo-endoribonuclease involved in late-stage 70S ribosome quality control and in maturation of the 3' terminus of the 16S rRNA. The protein is Endoribonuclease YbeY of Lacticaseibacillus paracasei (strain ATCC 334 / BCRC 17002 / CCUG 31169 / CIP 107868 / KCTC 3260 / NRRL B-441) (Lactobacillus paracasei).